A 301-amino-acid polypeptide reads, in one-letter code: E3 ubiquitin-protein ligase DIS1 (301 aa).

The RING-type; degenerate zinc finger occupies 53 to 89 (CPVCLSAMYPPIHQCSNGHTLCSGCKPRVHNRCPTCR). Residues 106–166 (SLELPCKYQN…LVNHLKDDHK (61 aa)) form an SIAH-type; degenerate zinc finger.

Belongs to the SINA (Seven in absentia) family. Homodimer. Interacts with NEK6. Interacts with SKIPA.

It is found in the nucleus. Its subcellular location is the cytoplasm. It catalyses the reaction S-ubiquitinyl-[E2 ubiquitin-conjugating enzyme]-L-cysteine + [acceptor protein]-L-lysine = [E2 ubiquitin-conjugating enzyme]-L-cysteine + N(6)-ubiquitinyl-[acceptor protein]-L-lysine.. Its pathway is protein modification; protein ubiquitination. In terms of biological role, E3 ubiquitin-protein ligase that mediates ubiquitination and subsequent proteasomal degradation of target proteins. E3 ubiquitin ligases accept ubiquitin from an E2 ubiquitin-conjugating enzyme in the form of a thioester and then directly transfers the ubiquitin to targeted substrates. Plays a negative role in drought stress tolerance through transcriptional and post-translational regulation of diverse stress-related genes. Interacts with the serine/threonine-protein kinase NEK6 and promotes its degradation via the 26S proteasome-dependent pathway. This chain is E3 ubiquitin-protein ligase DIS1, found in Oryza sativa subsp. japonica (Rice).